A 1323-amino-acid polypeptide reads, in one-letter code: Glutamate receptor ionotropic, NMDA 2D (1323 aa).

The signal sequence occupies residues 1 to 27 (MRGAGGPRGPRGPAKMLLLLALACASP). At 28 to 579 (FPEEVPGPGA…SPSAFLEPYS (552 aa)) the chain is on the extracellular side. N-linked (GlcNAc...) asparagine glycosylation occurs at Asn89. The cysteines at positions 101 and 345 are disulfide-linked. 4 N-linked (GlcNAc...) asparagine glycosylation sites follow: Asn349, Asn363, Asn381, and Asn464. Disulfide bonds link Cys452/Cys480 and Cys459/Cys481. Residues Ser536, Thr538, and Arg543 each coordinate L-glutamate. Residue Asn566 is glycosylated (N-linked (GlcNAc...) asparagine). A helical transmembrane segment spans residues 580 to 601 (PAVWVMMFVMCLTVVAVTVFIF). Residues 602–626 (EYLSPVGYNRSLATGKRPGGSTFTI) lie on the Cytoplasmic side of the membrane. Residues 627–638 (GKSIWLLWALVF) constitute an intramembrane region (discontinuously helical). The pore-forming stretch occupies residues 628 to 647 (KSIWLLWALVFNNSVPVENP). The Cytoplasmic segment spans residues 639-650 (NNSVPVENPRGT). A helical transmembrane segment spans residues 651–671 (TSKIMVLVWAFFAVIFLASYT). Residues 672-840 (ANLAAFMIQE…EVMSSKLDID (169 aa)) lie on the Extracellular side of the membrane. A glycan (N-linked (GlcNAc...) asparagine) is linked at Asn712. Positions 714, 715, and 756 each coordinate L-glutamate. Residues Cys770 and Cys825 are joined by a disulfide bond. The helical transmembrane segment at 841–864 (NMAGVFYMLLVAMGLSLLVFAWEH) threads the bilayer. Residues 865 to 1323 (LVYWRLRHCL…AHFSSLESEV (459 aa)) are Cytoplasmic-facing. Disordered stretches follow at residues 897–952 (EAAP…PGGA), 977–1112 (AAPR…SLGG), and 1201–1323 (PWAA…ESEV). The span at 899–929 (APPPAKPPPPPQPLPSPAYPAARPPPGPAPF) shows a compositional bias: pro residues. The segment covering 931-940 (PRERAAADRW) has biased composition (basic and acidic residues). Residues 977-986 (AAPRGAAGRP) are compositionally biased toward low complexity. The segment covering 987-1001 (LSPPTTQPPQKPPPS) has biased composition (pro residues). The span at 1030 to 1039 (AAAAAAVGPP) shows a compositional bias: low complexity. Pro residues predominate over residues 1080–1092 (TAPPPRRAAPPPC). Residues 1208–1228 (PRRRARCGCPRPHPHRPRASH) show a composition bias toward basic residues. Arg1303 carries the omega-N-methylarginine modification. Ser1313 carries the post-translational modification Phosphoserine. The short motif at 1321 to 1323 (SEV) is the PDZ-binding element.

It belongs to the glutamate-gated ion channel (TC 1.A.10.1) family. NR2D/GRIN2D subfamily. As to quaternary structure, heterotetramer. Forms heterotetrameric channels composed of two GluN1/zeta subunits (GRIN1), and two identical GluN2/epsilon subunits (GRIN2A, GRIN2B, GRIN2C or GRIN2D) or GluN3 subunits (GRIN3A or GRIN3B) (in vitro). In vivo, the subunit composition may depend on the expression levels of the different subunits. Interacts with PDZ domains of PATJ and DLG4. In terms of tissue distribution, detected in neonate brain synaptosomes (at protein level).

The protein resides in the cell membrane. It localises to the postsynaptic cell membrane. It carries out the reaction Ca(2+)(in) = Ca(2+)(out). The enzyme catalyses Na(+)(in) = Na(+)(out). It catalyses the reaction K(+)(in) = K(+)(out). Functionally, component of N-methyl-D-aspartate (NMDA) receptors (NMDARs) that function as heterotetrameric, ligand-gated cation channels with high calcium permeability and voltage-dependent block by Mg(2+). Participates in synaptic plasticity for learning and memory formation. Channel activation requires binding of the neurotransmitter L-glutamate to the GluN2 subunit, glycine or D-serine binding to the GluN1 subunit, plus membrane depolarization to eliminate channel inhibition by Mg(2+). NMDARs mediate simultaneously the potasium efflux and the influx of calcium and sodium. Each GluN2 subunit confers differential attributes to channel properties, including activation, deactivation and desensitization kinetics, pH sensitivity, Ca2(+) permeability, and binding to allosteric modulators. The sequence is that of Glutamate receptor ionotropic, NMDA 2D from Mus musculus (Mouse).